The chain runs to 418 residues: Equilibrative nucleotide transporter 6 (418 aa).

A run of 11 helical transmembrane segments spans residues 19–39 (AMIV…SMLT), 56–76 (VLTL…AYHE), 86–106 (LIGY…DLAT), 112–132 (FGPY…DATV), 142–162 (LMCP…GALT), 186–206 (MFLA…AYVL), 264–284 (HAVN…GFLY), 291–311 (GLGA…DLVG), 326–346 (KLIT…YFTA), 353–373 (WMIM…VCIM), and 392–412 (LVIF…LWLI).

This sequence belongs to the SLC29A/ENT transporter (TC 2.A.57) family. In terms of tissue distribution, expressed in leaves and siliques.

Its subcellular location is the cell membrane. Functionally, nucleoside transporter that can mediate uptake of adenosine, uridine, guanosine or cytidine when expressed in a heterologous system (yeast). The protein is Equilibrative nucleotide transporter 6 (ENT6) of Arabidopsis thaliana (Mouse-ear cress).